Reading from the N-terminus, the 261-residue chain is Imidazole glycerol phosphate synthase subunit HisF (261 aa).

Catalysis depends on residues Asp16 and Asp135.

The protein belongs to the HisA/HisF family. Heterodimer of HisH and HisF.

Its subcellular location is the cytoplasm. It catalyses the reaction 5-[(5-phospho-1-deoxy-D-ribulos-1-ylimino)methylamino]-1-(5-phospho-beta-D-ribosyl)imidazole-4-carboxamide + L-glutamine = D-erythro-1-(imidazol-4-yl)glycerol 3-phosphate + 5-amino-1-(5-phospho-beta-D-ribosyl)imidazole-4-carboxamide + L-glutamate + H(+). It participates in amino-acid biosynthesis; L-histidine biosynthesis; L-histidine from 5-phospho-alpha-D-ribose 1-diphosphate: step 5/9. Functionally, IGPS catalyzes the conversion of PRFAR and glutamine to IGP, AICAR and glutamate. The HisF subunit catalyzes the cyclization activity that produces IGP and AICAR from PRFAR using the ammonia provided by the HisH subunit. The sequence is that of Imidazole glycerol phosphate synthase subunit HisF from Mycolicibacterium smegmatis (strain ATCC 700084 / mc(2)155) (Mycobacterium smegmatis).